Reading from the N-terminus, the 325-residue chain is Electron transfer flavoprotein subunit alpha (325 aa).

Residue 262–290 (LYIACGISGAIQHLAGMSNSKVIVAINKD) participates in FAD binding.

This sequence belongs to the ETF alpha-subunit/FixB family. As to quaternary structure, heterodimer of an alpha and a beta subunit. FAD is required as a cofactor.

Its function is as follows. The electron transfer flavoprotein serves as a specific electron acceptor for other dehydrogenases. It transfers the electrons to the main respiratory chain via ETF-ubiquinone oxidoreductase (ETF dehydrogenase). This chain is Electron transfer flavoprotein subunit alpha (etfA), found in Bacillus subtilis (strain 168).